Consider the following 617-residue polypeptide: 1-deoxy-D-xylulose-5-phosphate synthase (617 aa).

Thiamine diphosphate-binding positions include His-76 and 117 to 119 (GHS). Asp-148 serves as a coordination point for Mg(2+). Residues 149 to 150 (GA), Asn-177, Tyr-285, and Glu-366 contribute to the thiamine diphosphate site. Asn-177 contributes to the Mg(2+) binding site.

It belongs to the transketolase family. DXPS subfamily. As to quaternary structure, homodimer. It depends on Mg(2+) as a cofactor. The cofactor is thiamine diphosphate.

It carries out the reaction D-glyceraldehyde 3-phosphate + pyruvate + H(+) = 1-deoxy-D-xylulose 5-phosphate + CO2. The protein operates within metabolic intermediate biosynthesis; 1-deoxy-D-xylulose 5-phosphate biosynthesis; 1-deoxy-D-xylulose 5-phosphate from D-glyceraldehyde 3-phosphate and pyruvate: step 1/1. Catalyzes the acyloin condensation reaction between C atoms 2 and 3 of pyruvate and glyceraldehyde 3-phosphate to yield 1-deoxy-D-xylulose-5-phosphate (DXP). The sequence is that of 1-deoxy-D-xylulose-5-phosphate synthase from Histophilus somni (strain 129Pt) (Haemophilus somnus).